Reading from the N-terminus, the 198-residue chain is Uracil phosphoribosyltransferase homolog (198 aa).

It belongs to the UPRTase family.

It localises to the plastid. The protein localises to the chloroplast. The protein is Uracil phosphoribosyltransferase homolog of Pyropia yezoensis (Susabi-nori).